Here is a 158-residue protein sequence, read N- to C-terminus: NADH-quinone oxidoreductase subunit B (158 aa).

Cysteine 37, cysteine 38, cysteine 102, and cysteine 132 together coordinate [4Fe-4S] cluster.

It belongs to the complex I 20 kDa subunit family. NDH-1 is composed of 14 different subunits. Subunits NuoB, C, D, E, F, and G constitute the peripheral sector of the complex. Requires [4Fe-4S] cluster as cofactor.

The protein localises to the cell inner membrane. It catalyses the reaction a quinone + NADH + 5 H(+)(in) = a quinol + NAD(+) + 4 H(+)(out). In terms of biological role, NDH-1 shuttles electrons from NADH, via FMN and iron-sulfur (Fe-S) centers, to quinones in the respiratory chain. Couples the redox reaction to proton translocation (for every two electrons transferred, four hydrogen ions are translocated across the cytoplasmic membrane), and thus conserves the redox energy in a proton gradient. The chain is NADH-quinone oxidoreductase subunit B from Alkalilimnicola ehrlichii (strain ATCC BAA-1101 / DSM 17681 / MLHE-1).